The chain runs to 527 residues: Bifunctional purine biosynthesis protein PurH (527 aa).

An MGS-like domain is found at 1–149 (MASDFLPVRR…KNFARVAVAT (149 aa)).

This sequence belongs to the PurH family.

The catalysed reaction is (6R)-10-formyltetrahydrofolate + 5-amino-1-(5-phospho-beta-D-ribosyl)imidazole-4-carboxamide = 5-formamido-1-(5-phospho-D-ribosyl)imidazole-4-carboxamide + (6S)-5,6,7,8-tetrahydrofolate. It carries out the reaction IMP + H2O = 5-formamido-1-(5-phospho-D-ribosyl)imidazole-4-carboxamide. It functions in the pathway purine metabolism; IMP biosynthesis via de novo pathway; 5-formamido-1-(5-phospho-D-ribosyl)imidazole-4-carboxamide from 5-amino-1-(5-phospho-D-ribosyl)imidazole-4-carboxamide (10-formyl THF route): step 1/1. Its pathway is purine metabolism; IMP biosynthesis via de novo pathway; IMP from 5-formamido-1-(5-phospho-D-ribosyl)imidazole-4-carboxamide: step 1/1. The sequence is that of Bifunctional purine biosynthesis protein PurH from Xanthomonas oryzae pv. oryzae (strain MAFF 311018).